We begin with the raw amino-acid sequence, 718 residues long: NF-kappa-B inhibitor zeta (718 aa).

A compositionally biased stretch (basic and acidic residues) spans 1-17; the sequence is MIVDKLLDDSRGGEGLR. 2 disordered regions span residues 1-20 and 58-108; these read MIVDKLLDDSRGGEGLRDAA and SAPG…RQQR. Low complexity predominate over residues 58 to 83; the sequence is SAPGSPGSDSSDFSSASSVSSCGAVE. Positions 84-97 are enriched in basic and acidic residues; sequence SRSRGGARAERQPV. The region spanning 108 to 130 is the OCA domain; that stretch reads RGPFQGVRVKNSVKELLLHIRSH. Residues 164–179 carry the Nuclear localization signal motif; sequence KRKGPDSLSDGPACKR. The interval 186–211 is disordered; sequence QFLTPPQTPTPGESMEDVHLNEPKQE. Residues 201 to 211 show a composition bias toward basic and acidic residues; that stretch reads EDVHLNEPKQE. Residues 321–394 form a required for transcriptional activity region; that stretch reads AYEPNLFDGP…MVGHEMASDS (74 aa). The tract at residues 404–718 is interaction with NFKB1/p50; it reads MGNPMNTTQL…KSIQQRAPPY (315 aa). ANK repeat units lie at residues 443–472, 479–508, 512–541, 551–580, 582–607, 612–641, and 648–681; these read DGDTFLHIAVAQGRRALSYVLARKMNALHM, NGQSAFQVAVAANQHLIVQDLVNIGAQVNT, WGRTPLHVCAEKGHSQVLQAIQKGAVGSNQ, DGLTPLHCAVIAHNAVVHELQRNQQPHSPE, QELLLKNKSLVDTIKCLIQMGAAVEA, SGRTALHLAAEEANLELIRLFLELPSCLSF, and NGNTALHVAASLQYRLTQLDAVRLLMRKGADPST.

Interacts with NFKB1/p50. Interacts with RELA. Interacts with AKIRIN2. As to expression, expressed at high levels in peripheral blood leukocytes and lung, at moderate levels in liver, placenta, and at low levels in spleen, kidney, skeletal muscle and heart.

It is found in the nucleus. Functionally, involved in regulation of NF-kappa-B transcription factor complexes. Inhibits NF-kappa-B activity without affecting its nuclear translocation upon stimulation. Inhibits DNA-binding of RELA and NFKB1/p50, and of the NF-kappa-B p65-p50 heterodimer and the NF-kappa-B p50-p50 homodimer. Also seems to activate NF-kappa-B-mediated transcription. In vitro, upon association with NFKB1/p50 has transcriptional activation activity and, together with NFKB1/p50 and RELA, is recruited to LCN2 promoters. Promotes transcription of LCN2 and DEFB4. Is recruited to IL-6 promoters and activates IL-6 but decreases TNF-alpha production in response to LPS. Seems to be involved in the induction of inflammatory genes activated through TLR/IL-1 receptor signaling. Involved in the induction of T helper 17 cells (Th17) differentiation upon recognition of antigen by T cell antigen receptor (TCR). The polypeptide is NF-kappa-B inhibitor zeta (NFKBIZ) (Homo sapiens (Human)).